The following is a 380-amino-acid chain: Tetraacyldisaccharide 4'-kinase (380 aa).

51-58 (SVGGTGKT) serves as a coordination point for ATP.

Belongs to the LpxK family.

It catalyses the reaction a lipid A disaccharide + ATP = a lipid IVA + ADP + H(+). Its pathway is glycolipid biosynthesis; lipid IV(A) biosynthesis; lipid IV(A) from (3R)-3-hydroxytetradecanoyl-[acyl-carrier-protein] and UDP-N-acetyl-alpha-D-glucosamine: step 6/6. Transfers the gamma-phosphate of ATP to the 4'-position of a tetraacyldisaccharide 1-phosphate intermediate (termed DS-1-P) to form tetraacyldisaccharide 1,4'-bis-phosphate (lipid IVA). This chain is Tetraacyldisaccharide 4'-kinase, found in Bacteroides thetaiotaomicron (strain ATCC 29148 / DSM 2079 / JCM 5827 / CCUG 10774 / NCTC 10582 / VPI-5482 / E50).